Here is a 769-residue protein sequence, read N- to C-terminus: MINIKDISKSSNQSEEKSLKGTSSKTKYPFAAKSLFKGSNNITPYYLSTSNTFQCVASESIQTWLLSDDGHIFTSSGNFVLDVSSGGYFVELVQLNSNSKTQIWTIDTTNNKIQNQGNGKYLDIDNLKICVAPLNGNATQKWTTFRRAPIPTGNWGYFQSKQLDSNNNYWGLSVLNNSKSYNTSVVMNKVQAKSIGQIWQMTNDGHILSRLDGNLVLDIGPSINGSKTNYYLDTNVYKANDLKQQWGINENNQIFNQYYPNLCIGFVGELGVDSTVNCVLAQPSSASDINFQWITNPTYSLNEIVSEVPEPFPAYTSGDLLASYQYISNIATNGHTDDIRSLYTSINVSLEIFYVNVTNATCPSSIHSTEDFSNVQNQIKNELTYAITVRLVFENYSGFYSKLFSQGSTNLTNLANLINVDMSSDQVVNGDYTDAITSVFYAIISEIPIGGSIIANIGESAVEFGELYAESNDSGPSTYQVTLSKLYDHLNENYENEMTNAQSMKNTILQDWGMMSKTFALCFLPTKNPSSLNINGLDFQKISTIASLAYQTAMIQMLLPTNYQIYFTPAGYYAPVSSDDYSYTDSTGTYIMAEIDNCNSYPPKALTDKLWNNGVSKQEVFTSSYGWNLATSVTYYNMVDKYSGMFKLSFPTVKNFTSVPMQFVMTNGSDRVGTFNVKTHFAGLASTYYYSGALGHHYYDIAVTDIDGNKVANFTVDNNLEALEGSYVSIKTGSLVVQPGYVVGNPTCNQGSFSQGFAASILIPIYKSN.

The disordered stretch occupies residues 1–21 (MINIKDISKSSNQSEEKSLKG). Ricin B-type lectin domains are found at residues 25–145 (KTKY…WTTF) and 116–249 (QGNG…WGIN).

The protein belongs to the cup family.

It localises to the cytoplasm. The protein localises to the membrane. Its function is as follows. May play an important role in stabilizing and/or regulating the cell membrane during Ca(2+) stress or certain stages of development. The chain is Calcium up-regulated protein F (cupF) from Dictyostelium discoideum (Social amoeba).